Reading from the N-terminus, the 428-residue chain is YTH domain-containing protein ECT1 (428 aa).

Positions 245-382 constitute a YTH domain; that stretch reads AKFFVIKSYS…EHGTKIIKIF (138 aa). Residues 251–253, Asp-257, 267–268, Asn-300, Trp-324, Trp-329, and Trp-337 each bind RNA; these read KSY and WS.

As to quaternary structure, interacts (via C-terminus) with CIPK1. Expressed in root apex, shoot apex, lateral root primordia, stamens, carpels and trichomes.

It is found in the nucleus. The protein localises to the cytoplasm. Specifically recognizes and binds N6-methyladenosine (m6A)-containing RNAs, and regulates mRNA stability. M6A is a modification present at internal sites of mRNAs and some non-coding RNAs and plays a role in mRNA stability and processing. The polypeptide is YTH domain-containing protein ECT1 (Arabidopsis thaliana (Mouse-ear cress)).